The following is a 309-amino-acid chain: Porphobilinogen deaminase (309 aa).

Position 241 is an S-(dipyrrolylmethanemethyl)cysteine (Cys241).

It belongs to the HMBS family. Monomer. Dipyrromethane serves as cofactor.

The enzyme catalyses 4 porphobilinogen + H2O = hydroxymethylbilane + 4 NH4(+). It functions in the pathway porphyrin-containing compound metabolism; protoporphyrin-IX biosynthesis; coproporphyrinogen-III from 5-aminolevulinate: step 2/4. Its function is as follows. Tetrapolymerization of the monopyrrole PBG into the hydroxymethylbilane pre-uroporphyrinogen in several discrete steps. This is Porphobilinogen deaminase from Bacillus cereus (strain ATCC 10987 / NRS 248).